The chain runs to 884 residues: Alanine--tRNA ligase (884 aa).

Positions 565, 569, 672, and 676 each coordinate Zn(2+).

The protein belongs to the class-II aminoacyl-tRNA synthetase family. The cofactor is Zn(2+).

The protein resides in the cytoplasm. The catalysed reaction is tRNA(Ala) + L-alanine + ATP = L-alanyl-tRNA(Ala) + AMP + diphosphate. Catalyzes the attachment of alanine to tRNA(Ala) in a two-step reaction: alanine is first activated by ATP to form Ala-AMP and then transferred to the acceptor end of tRNA(Ala). Also edits incorrectly charged Ser-tRNA(Ala) and Gly-tRNA(Ala) via its editing domain. In Sphingopyxis alaskensis (strain DSM 13593 / LMG 18877 / RB2256) (Sphingomonas alaskensis), this protein is Alanine--tRNA ligase.